The following is a 174-amino-acid chain: Peptidyl-prolyl cis-trans isomerase D, mitochondrial (174 aa).

A PPIase cyclophilin-type domain is found at 10 to 173; sequence FFQIKQGNTP…AACVIEDCGQ (164 aa).

It belongs to the cyclophilin-type PPIase family. PPIase D subfamily.

The protein localises to the mitochondrion. The catalysed reaction is [protein]-peptidylproline (omega=180) = [protein]-peptidylproline (omega=0). With respect to regulation, binds cyclosporin A (CsA). CsA mediates some of its effects via an inhibitory action on PPIase. PPIases accelerate the folding of proteins. It catalyzes the cis-trans isomerization of proline imidic peptide bonds in oligopeptides. The chain is Peptidyl-prolyl cis-trans isomerase D, mitochondrial (cypD) from Dictyostelium discoideum (Social amoeba).